A 358-amino-acid polypeptide reads, in one-letter code: ATP synthase gamma chain, chloroplastic (358 aa).

A chloroplast-targeting transit peptide spans 1 to 35; sequence MAAMLASKQGAFMGRSSFAPAPKGVASRGSLQVVA. Residue Cys-123 is part of the active site. The cysteines at positions 233 and 239 are disulfide-linked.

It belongs to the ATPase gamma chain family. In terms of assembly, F-type ATPases have 2 components, F(1) - the catalytic core - and F(0) - the membrane proton channel. F(1) has five subunits: alpha(3), beta(3), gamma(1), delta(1), epsilon(1). F(0) has four main subunits: a(1), b(1), b'(1) and c(10-14). The alpha and beta chains form an alternating ring which encloses part of the gamma chain. F(1) is attached to F(0) by a central stalk formed by the gamma and epsilon chains, while a peripheral stalk is formed by the delta, b and b' chains.

It is found in the plastid. It localises to the chloroplast thylakoid membrane. In terms of biological role, f(1)F(0) ATP synthase produces ATP from ADP in the presence of a proton or sodium gradient. F-type ATPases consist of two structural domains, F(1) containing the extramembraneous catalytic core and F(0) containing the membrane proton channel, linked together by a central stalk and a peripheral stalk. During catalysis, ATP synthesis in the catalytic domain of F(1) is coupled via a rotary mechanism of the central stalk subunits to proton translocation. Produces ATP from ADP in the presence of a proton gradient across the membrane. The gamma chain is believed to be important in regulating ATPase activity and the flow of protons through the CF(0) complex. In Chlamydomonas reinhardtii (Chlamydomonas smithii), this protein is ATP synthase gamma chain, chloroplastic.